A 174-amino-acid chain; its full sequence is MAPTGQAVDVAVREGAGDVGYSVERENLPADDPVRNGNRWRVIAVDTEHHRIAARRLGDGARAAFSGDYLHEHITHGYAITVHASQGTTAHSTHAVLGDNTSRATLYVAMTPARESNTAYLCERTAGEGARVDLAGWDLWVSGKAEAMSDEKSASPVWCRVGARCDHRGKRSCW.

This is an uncharacterized protein from Mycobacterium tuberculosis (strain CDC 1551 / Oshkosh).